Reading from the N-terminus, the 370-residue chain is Nodulation protein Z (370 aa).

The region spanning 47–361 (SSNDRFVVSR…NDPGRLILIE (315 aa)) is the GT23 domain.

It belongs to the glycosyltransferase 23 family.

Its function is as follows. Fucosyltransferase which adds the fucose moiety of the nod factor on its terminal reducing N-acetylglucosamine end. Uses GDP-fucose as the donor group. This chain is Nodulation protein Z (nodZ), found in Bradyrhizobium diazoefficiens (strain JCM 10833 / BCRC 13528 / IAM 13628 / NBRC 14792 / USDA 110).